The primary structure comprises 89 residues: MGDVAAKIKIMPESVDTDLGELKEKIKGVIPAGADLHGDIVEEPIAFGLKALIVTLIVNDEEGGTEPAEEAFAKVSGVENVQVVDVYRI.

The protein belongs to the EF-1-beta/EF-1-delta family.

Its function is as follows. Promotes the exchange of GDP for GTP in EF-1-alpha/GDP, thus allowing the regeneration of EF-1-alpha/GTP that could then be used to form the ternary complex EF-1-alpha/GTP/AAtRNA. This is Elongation factor 1-beta from Methanosarcina barkeri (strain Fusaro / DSM 804).